Reading from the N-terminus, the 279-residue chain is Phosphonates import ATP-binding protein PhnC 2 (279 aa).

Residues 10-253 (LSLKGVSVRY…VARNLYAKQS (244 aa)) form the ABC transporter domain. An ATP-binding site is contributed by 43 to 50 (GASGAGKS). Residues 253 to 262 (SNASNTSAST) are compositionally biased toward low complexity. A disordered region spans residues 253 to 279 (SNASNTSASTDSPRTLQSSQTKELLPC). Over residues 263-279 (DSPRTLQSSQTKELLPC) the composition is skewed to polar residues.

This sequence belongs to the ABC transporter superfamily. Phosphonates importer (TC 3.A.1.9.1) family. In terms of assembly, the complex is composed of two ATP-binding proteins (PhnC), two transmembrane proteins (PhnE) and a solute-binding protein (PhnD).

It is found in the cell inner membrane. It catalyses the reaction phosphonate(out) + ATP + H2O = phosphonate(in) + ADP + phosphate + H(+). Part of the ABC transporter complex PhnCDE involved in phosphonates import. Responsible for energy coupling to the transport system. This chain is Phosphonates import ATP-binding protein PhnC 2, found in Cupriavidus metallidurans (strain ATCC 43123 / DSM 2839 / NBRC 102507 / CH34) (Ralstonia metallidurans).